Reading from the N-terminus, the 188-residue chain is Inosine triphosphate pyrophosphatase (188 aa).

ITP is bound at residue 7–12 (TGNAGK). Position 36 (E36) interacts with Mg(2+). ITP-binding positions include K48, 64-65 (DT), K81, 140-143 (FGWN), K163, and 168-169 (HR).

It belongs to the HAM1 NTPase family. As to quaternary structure, homodimer. Requires Mg(2+) as cofactor. Mn(2+) serves as cofactor.

It localises to the cytoplasm. Its subcellular location is the nucleus. It carries out the reaction ITP + H2O = IMP + diphosphate + H(+). The catalysed reaction is dITP + H2O = dIMP + diphosphate + H(+). The enzyme catalyses XTP + H2O = XMP + diphosphate + H(+). In terms of biological role, pyrophosphatase that hydrolyzes non-canonical purine nucleotides such as inosine triphosphate (ITP), deoxyinosine triphosphate (dITP) or xanthosine 5'-triphosphate (XTP) to their respective monophosphate derivatives. The enzyme does not distinguish between the deoxy- and ribose forms. Probably excludes non-canonical purines from RNA and DNA precursor pools, thus preventing their incorporation into RNA and DNA and avoiding chromosomal lesions. The polypeptide is Inosine triphosphate pyrophosphatase (Yarrowia lipolytica (strain CLIB 122 / E 150) (Yeast)).